The following is a 400-amino-acid chain: Serine/threonine transporter SstT (400 aa).

Helical transmembrane passes span 14–34, 48–68, 76–96, 136–156, 177–197, 211–231, 285–305, 311–331, and 349–371; these read IIIAIILGIGVALLFPTVTPY, SVAPILVFVLVLSSIANFQVG, VLLLYVVGMLLAAFSAVIASL, AISEANFIGILAWAIGLGLAM, IIHKVIAFAPVGIFGLVAVTF, LLAVLLGTMLFVALVINPILV, IPLGATVNMAGAAVTITVLTL, LGIHVDLATMIILSVVATISA, and CSLFGISSEIAMQVVAVGMIISV.

It belongs to the dicarboxylate/amino acid:cation symporter (DAACS) (TC 2.A.23) family.

The protein resides in the cell inner membrane. It carries out the reaction L-serine(in) + Na(+)(in) = L-serine(out) + Na(+)(out). It catalyses the reaction L-threonine(in) + Na(+)(in) = L-threonine(out) + Na(+)(out). In terms of biological role, involved in the import of serine and threonine into the cell, with the concomitant import of sodium (symport system). In Acinetobacter baumannii (strain ATCC 17978 / DSM 105126 / CIP 53.77 / LMG 1025 / NCDC KC755 / 5377), this protein is Serine/threonine transporter SstT.